An 894-amino-acid chain; its full sequence is Translation initiation factor IF-2 (894 aa).

The disordered stretch occupies residues 25 to 304 (ADAGMNKASS…KPTSMQHGFD (280 aa)). 5 stretches are compositionally biased toward basic and acidic residues: residues 33–44 (SSDHVSDEEKQK), 52–62 (EHGDKSGESEP), 101–174 (STIE…KEMN), 184–239 (AKKE…ENSD), and 247–263 (YARE…EGGA). Residues 283–293 (RGGKGRNKGKL) show a composition bias toward basic residues. A tr-type G domain is found at 393–562 (PRAPVVTIMG…LLQSEVLELT (170 aa)). The G1 stretch occupies residues 402 to 409 (GHVDHGKT). 402–409 (GHVDHGKT) is a binding site for GTP. The segment at 427–431 (GITQH) is G2. The segment at 448 to 451 (DTPG) is G3. GTP-binding positions include 448–452 (DTPGH) and 502–505 (NKID). The segment at 502 to 505 (NKID) is G4. A G5 region spans residues 538–540 (SAK).

The protein belongs to the TRAFAC class translation factor GTPase superfamily. Classic translation factor GTPase family. IF-2 subfamily.

The protein resides in the cytoplasm. In terms of biological role, one of the essential components for the initiation of protein synthesis. Protects formylmethionyl-tRNA from spontaneous hydrolysis and promotes its binding to the 30S ribosomal subunits. Also involved in the hydrolysis of GTP during the formation of the 70S ribosomal complex. This chain is Translation initiation factor IF-2, found in Vibrio campbellii (strain ATCC BAA-1116).